A 600-amino-acid chain; its full sequence is Proton channel OTOP1 (600 aa).

Residues 1–50 (MPGDRGALSSPAASSGSPSAAPSGIAACPPPPSPLARASPQASGPRRGAS) form a disordered region. Over 1 to 56 (MPGDRGALSSPAASSGSPSAAPSGIAACPPPPSPLARASPQASGPRRGASVPQKLA) the chain is Cytoplasmic. A compositionally biased stretch (low complexity) spans 7-27 (ALSSPAASSGSPSAAPSGIAA). The chain crosses the membrane as a helical span at residues 57 to 78 (ETLSSQYGLNVFVAGLLFLLAW). The Extracellular portion of the chain corresponds to 79 to 86 (AVHATGVG). Residues 87-110 (KSDLLCVLTALMLLQLLWMLWYVG) traverse the membrane as a helical segment. Over 111–128 (RSYMQRRLIRPKDTHAGA) the chain is Cytoplasmic. The chain crosses the membrane as a helical span at residues 129-151 (RWLRGSITLFAFITIVLGCLKVA). The Extracellular portion of the chain corresponds to 152-161 (YFIGFSECLS). The chain crosses the membrane as a helical span at residues 162 to 186 (ATEGVFPVTHAVHTLLQVYFLWGHA). Over 187–194 (KDIIMSFK) the chain is Cytoplasmic. The helical transmembrane segment at 195-221 (TLERFGVIHSVFTNLLLWANSVLNESK) threads the bilayer. Residues 222–262 (HQLNEHKERLITLGFGNITIVLDDHTPQCNCTPPALCSALS) lie on the Extracellular side of the membrane. Residues 263–288 (HGIYYLYPFNIEYQILASTMLYVLWK) form a helical membrane-spanning segment. The Cytoplasmic segment spans residues 289–309 (NIGRRVDSSRHQKMQCRFDGV). The helical transmembrane segment at 310 to 332 (LVGSVLGLTVLAATIAVVVVYMI) threads the bilayer. The Extracellular segment spans residues 333–342 (HIGRSKSKSE). A helical membrane pass occupies residues 343–368 (SALIMFYLYAITVLLLMGAAGLVGSW). Topologically, residues 369-386 (IYRVDEKSLDESKNPARK) are cytoplasmic. Residues 387 to 411 (LDADLLVATASGSWLLSWGSILAIA) form a helical membrane-spanning segment. Residues 412–421 (CAETRPPYTW) are Extracellular-facing. A helical membrane pass occupies residues 422-442 (YNLPYSVLVIVEKYVQNIFII). Residues 443–532 (ESVHLEPEGV…QGGMKRRLLR (90 aa)) are Cytoplasmic-facing. Residues 533-551 (NITAFLFLCNISLWIPPAF) traverse the membrane as a helical segment. At 552–569 (GCRPEYDNGLEEIVFGFE) the chain is on the extracellular side. Residues 570–593 (PWIIVVNLAMPFSIFYRMHAAAAL) traverse the membrane as a helical segment. Residues 594–600 (FEVYCKI) are Cytoplasmic-facing.

Belongs to the otopetrin family. In terms of assembly, homodimer. Interacts with STAT1, independently of STAT1 phosphorylation status.

Its subcellular location is the cell membrane. The protein resides in the cell projection. It is found in the microvillus. It carries out the reaction H(+)(in) = H(+)(out). Activated by both acid and alkali, with proton influx in response to extracellular acid and proton efflux during alkali stimulation. Inhibited by Zn(2+); this inhibition is thought to be pH-sensitive. Currents evoked in response to mild acid (pH 6.0) stimulus may also be mildly potentiated by exposure to Zn(2+). Activated by NH(4)Cl. Functionally, proton-selective ion channel. Biphasically modulated by acid and alkali, mediating proton influx and efflux in response to extracellular acid and base stimulation, respectively. Sour taste receptor, which carries inward currents in response to extracellular acidification. Sensor for ammonium chloride (NH(4)Cl) in taste receptor cells. NH(4)Cl acts by increasing the intracellular pH, thereby generating a driving force for proton entry through OTOP1 channel. Might also participate in alkaline sensation. Plays a role in the regulation of Ca(2+) flux in response to purigenic (ATP, ADP and UDP) stimuli, leading to increase in cytosolic Ca(2+) due to influx of extracellular calcium. May play this role by inhibiting P2Y purinoceptor-mediated Ca(2+) release in a Ca(2+)-dependent manner and promote an influx of Ca(2+) in response to ATP. Through this mechanism and possibly others, plays a role in the formation and function of calcium carbonate-based structures in the vestibular system of the inner ear, called otoconia, that sense gravity and linear acceleration. In obesity, may attenuate adipose tissue inflammation, through the negative regulation of IFNG signaling, hence may play an adaptive role in the maintainance of metabolic homeostasis. Following alkali activation, may also be permeable Na(+), K(+), Cs(+) and Li(+). This chain is Proton channel OTOP1, found in Rattus norvegicus (Rat).